Consider the following 193-residue polypeptide: Probable thymidylate kinase (193 aa).

7-14 (GIDGAGKT) is a binding site for ATP.

Belongs to the thymidylate kinase family.

It catalyses the reaction dTMP + ATP = dTDP + ADP. The protein is Probable thymidylate kinase (tmk) of Thermoplasma acidophilum (strain ATCC 25905 / DSM 1728 / JCM 9062 / NBRC 15155 / AMRC-C165).